The sequence spans 78 residues: Defensin-like protein 308 (78 aa).

The N-terminal stretch at 1–19 (MKTSAFFIAVLLILSCSSS) is a signal peptide. 3 disulfides stabilise this stretch: Cys31/Cys50, Cys37/Cys55, and Cys41/Cys57.

Belongs to the DEFL family.

Its subcellular location is the secreted. This Arabidopsis thaliana (Mouse-ear cress) protein is Defensin-like protein 308.